Here is a 166-residue protein sequence, read N- to C-terminus: Nucleotide-binding protein Acid_3194 (166 aa).

This sequence belongs to the YajQ family.

Functionally, nucleotide-binding protein. In Solibacter usitatus (strain Ellin6076), this protein is Nucleotide-binding protein Acid_3194.